The sequence spans 359 residues: 3-dehydroquinate synthase (359 aa).

Residues 71–76 (DGEAYK), 105–109 (GVIGD), 129–130 (TT), K142, and K151 each bind NAD(+). Zn(2+) is bound by residues E184, H247, and H264.

Belongs to the sugar phosphate cyclases superfamily. Dehydroquinate synthase family. It depends on Co(2+) as a cofactor. The cofactor is Zn(2+). Requires NAD(+) as cofactor.

It is found in the cytoplasm. It carries out the reaction 7-phospho-2-dehydro-3-deoxy-D-arabino-heptonate = 3-dehydroquinate + phosphate. The protein operates within metabolic intermediate biosynthesis; chorismate biosynthesis; chorismate from D-erythrose 4-phosphate and phosphoenolpyruvate: step 2/7. Its function is as follows. Catalyzes the conversion of 3-deoxy-D-arabino-heptulosonate 7-phosphate (DAHP) to dehydroquinate (DHQ). This is 3-dehydroquinate synthase from Burkholderia ambifaria (strain ATCC BAA-244 / DSM 16087 / CCUG 44356 / LMG 19182 / AMMD) (Burkholderia cepacia (strain AMMD)).